Consider the following 583-residue polypeptide: Cationic amino acid transporter 6, chloroplastic (583 aa).

The transit peptide at 1–50 (MEVQSSSNNGGHSSFSSLRVYLNSLSATPSRLSRRAISVSTSSDEMSRVR) directs the protein to the chloroplast. 14 helical membrane-spanning segments follow: residues 63 to 83 (WYDL…FVTT), 91 to 111 (AGPS…LSAF), 132 to 152 (ITFG…DYVM), 186 to 206 (GFNE…VIIC), 216 to 236 (NMIM…MGFI), 255 to 275 (FFPF…LSYI), 294 to 314 (IPVG…LMAV), 347 to 367 (VVGI…MLGQ), 397 to 417 (ASTF…LNVL), 418 to 438 (LNLV…ALIF), 450 to 470 (WPTL…TLIW), 481 to 501 (FMLG…QCVV), 509 to 529 (LWGV…NIFL), and 541 to 561 (FGFF…HASS).

This sequence belongs to the amino acid-polyamine-organocation (APC) superfamily. Cationic amino acid transporter (CAT) (TC 2.A.3.3) family. As to expression, expressed in roots, stems, flowers, and leaves.

Its subcellular location is the plastid. It localises to the chloroplast membrane. Permease involved in the transport of the cationic neutral or acidic amino acids. The polypeptide is Cationic amino acid transporter 6, chloroplastic (CAT6) (Arabidopsis thaliana (Mouse-ear cress)).